The following is a 1060-amino-acid chain: Desmoglein-1-beta (1060 aa).

A signal peptide spans 1-23; that stretch reads MDWHSFRIAALLLTSLVVLEVNS. A propeptide spanning residues 24-49 is cleaved from the precursor; the sequence is EFQIQVRDHNAKNGTIKWHSIRRQKR. 4 consecutive Cadherin domains span residues 50–157, 158–269, 270–389, and 386–493; these read EWIK…PPVF, SMTT…IPYL, EQSS…RPGS, and RPGS…PGSD. At 50 to 567 the chain is on the extracellular side; the sequence is EWIKFAAACR…ITEDNVHFGP (518 aa). Asn110 carries an N-linked (GlcNAc...) (high mannose) asparagine glycan. N-linked (GlcNAc...) asparagine glycosylation occurs at Asn180. The tract at residues 490-560 is disordered; the sequence is PGSDGGGSSS…PEPEPFDITE (71 aa). Residues 492-503 show a composition bias toward gly residues; the sequence is SDGGGSSSGSGG. Residues 510–519 are compositionally biased toward polar residues; it reads NGYQGTSTVG. The segment covering 525-537 has biased composition (gly residues); it reads GSGGVTSSGGGSG. The span at 549 to 560 shows a compositional bias: acidic residues; the sequence is DEPEPEPFDITE. The helical transmembrane segment at 568 to 588 threads the bilayer; that stretch reads AGIGLLIMGFLVLGLVPFLLI. Residues 589-1060 lie on the Cytoplasmic side of the membrane; the sequence is CCDCGGAPGG…TKYSTVQYSK (472 aa). The span at 792–801 shows a compositional bias: low complexity; it reads PDPDSSWPPQ. A disordered region spans residues 792 to 811; it reads PDPDSSWPPQSTEPMCPQST. Desmoglein repeat repeat units lie at residues 835–861, 862–891, 892–921, 922–949, and 950–978; these read AYPS…TVRE, SYAT…ERVV, GPVP…ERVI, APGS…ERVI, and QPTS…ERVV.

In terms of assembly, interacts with DSC3; there is evidence to suggest that the interaction promotes cell-cell adhesion of keratinocytes. Expressed in epidermis.

It localises to the cell membrane. Its subcellular location is the cell junction. The protein resides in the desmosome. The protein localises to the cytoplasm. It is found in the nucleus. Component of intercellular desmosome junctions. Involved in the interaction of plaque proteins and intermediate filaments mediating cell-cell adhesion. The protein is Desmoglein-1-beta (Dsg1b) of Mus musculus (Mouse).